We begin with the raw amino-acid sequence, 395 residues long: Putative F-box protein At5g42430 (395 aa).

In terms of domain architecture, F-box spans 4-53 (EENSDSIPIDLILEILSRLPAKSITRFHCVSKLWGSMLCRPYFNELFLTI).

In Arabidopsis thaliana (Mouse-ear cress), this protein is Putative F-box protein At5g42430.